Consider the following 242-residue polypeptide: Protein fmp-52, mitochondrial (242 aa).

The transit peptide at Met-1–Val-87 directs the protein to the mitochondrion. The interval Ser-33–Asn-58 is disordered. Polar residues predominate over residues Gln-35 to Asn-58.

Belongs to the FMP52 family.

Its subcellular location is the mitochondrion outer membrane. This chain is Protein fmp-52, mitochondrial (fmp-52), found in Neurospora crassa (strain ATCC 24698 / 74-OR23-1A / CBS 708.71 / DSM 1257 / FGSC 987).